We begin with the raw amino-acid sequence, 335 residues long: Glycerol-3-phosphate dehydrogenase [NAD(P)+] (335 aa).

Residues Ser-12, Trp-13, Arg-33, Arg-34, and Lys-107 each coordinate NADPH. Positions 107, 134, and 136 each coordinate sn-glycerol 3-phosphate. Ala-138 is an NADPH binding site. Lys-189, Asp-242, Ser-252, Arg-253, and Asn-254 together coordinate sn-glycerol 3-phosphate. Lys-189 (proton acceptor) is an active-site residue. Residue Arg-253 participates in NADPH binding. Val-277 and Glu-279 together coordinate NADPH.

The protein belongs to the NAD-dependent glycerol-3-phosphate dehydrogenase family.

It localises to the cytoplasm. It carries out the reaction sn-glycerol 3-phosphate + NAD(+) = dihydroxyacetone phosphate + NADH + H(+). The catalysed reaction is sn-glycerol 3-phosphate + NADP(+) = dihydroxyacetone phosphate + NADPH + H(+). It participates in membrane lipid metabolism; glycerophospholipid metabolism. Its function is as follows. Catalyzes the reduction of the glycolytic intermediate dihydroxyacetone phosphate (DHAP) to sn-glycerol 3-phosphate (G3P), the key precursor for phospholipid synthesis. The polypeptide is Glycerol-3-phosphate dehydrogenase [NAD(P)+] (Moorella thermoacetica (strain ATCC 39073 / JCM 9320)).